A 666-amino-acid chain; its full sequence is UvrABC system protein B (666 aa).

Positions 25–412 (NGIKNNNKWQ…SENIAEQVIR (388 aa)) constitute a Helicase ATP-binding domain. 38–45 (GVTGSGKT) is an ATP binding site. Residues 91-114 (YYDYYQPEAYVAQTDTYIEKDASI) carry the Beta-hairpin motif. Residues 429-595 (QIDDLYSEIK…TIKKAVRDVI (167 aa)) form the Helicase C-terminal domain. One can recognise a UVR domain in the interval 622–657 (DKLIKEFEKEMKEAAKELQFEKAAYFRDKVNELKKK).

This sequence belongs to the UvrB family. Forms a heterotetramer with UvrA during the search for lesions. Interacts with UvrC in an incision complex.

The protein resides in the cytoplasm. In terms of biological role, the UvrABC repair system catalyzes the recognition and processing of DNA lesions. A damage recognition complex composed of 2 UvrA and 2 UvrB subunits scans DNA for abnormalities. Upon binding of the UvrA(2)B(2) complex to a putative damaged site, the DNA wraps around one UvrB monomer. DNA wrap is dependent on ATP binding by UvrB and probably causes local melting of the DNA helix, facilitating insertion of UvrB beta-hairpin between the DNA strands. Then UvrB probes one DNA strand for the presence of a lesion. If a lesion is found the UvrA subunits dissociate and the UvrB-DNA preincision complex is formed. This complex is subsequently bound by UvrC and the second UvrB is released. If no lesion is found, the DNA wraps around the other UvrB subunit that will check the other stand for damage. This is UvrABC system protein B from Clostridium acetobutylicum (strain ATCC 824 / DSM 792 / JCM 1419 / IAM 19013 / LMG 5710 / NBRC 13948 / NRRL B-527 / VKM B-1787 / 2291 / W).